Reading from the N-terminus, the 42-residue chain is Large ribosomal subunit protein bL36 (42 aa).

The protein belongs to the bacterial ribosomal protein bL36 family.

This is Large ribosomal subunit protein bL36 from Wolbachia sp. subsp. Brugia malayi (strain TRS).